Here is a 112-residue protein sequence, read N- to C-terminus: uncharacterized protein (112 aa).

The protein localises to the plastid. Its subcellular location is the chloroplast. This is an uncharacterized protein from Chlamydomonas reinhardtii (Chlamydomonas smithii).